The sequence spans 272 residues: uncharacterized protein (272 aa).

The next 6 helical transmembrane spans lie at 20–37, 57–77, 97–119, 155–177, 184–203, and 234–256; these read VYLSVFIVLALYCVNLLI, HPLTYTIIPTYLVVLTAHFSL, LNVSCIAIVTTGYSVLIAFIMLM, SIATLLLLWLLLFLLGLLFYVIF, LVSLLFVFLLNIMNAAVTLG, and PYSIFVYWIMLIAVIYLIGWLVI.

Its subcellular location is the cell membrane. This is an uncharacterized protein from Halalkalibacterium halodurans (strain ATCC BAA-125 / DSM 18197 / FERM 7344 / JCM 9153 / C-125) (Bacillus halodurans).